The chain runs to 291 residues: Flavonol synthase/flavanone 3-hydroxylase (291 aa).

Residues 151 to 250 (CWYVMNINHY…RMSWPVLVSP (100 aa)) form the Fe2OG dioxygenase domain. Fe cation contacts are provided by histidine 175, aspartate 177, and histidine 231.

This sequence belongs to the iron/ascorbate-dependent oxidoreductase family. Requires L-ascorbate as cofactor. Fe cation is required as a cofactor.

It is found in the cytoplasm. The catalysed reaction is a (2R,3R)-dihydroflavonol + 2-oxoglutarate + O2 = a flavonol + succinate + CO2 + H2O. It catalyses the reaction a (2S)-flavan-4-one + 2-oxoglutarate + O2 = a (2R,3R)-dihydroflavonol + succinate + CO2. Its pathway is secondary metabolite biosynthesis; flavonoid biosynthesis. Catalyzes the formation of flavonols from dihydroflavonols. It can act on dihydrokaempferol to produce kaempferol, on dihydroquercetin to produce quercitin and on dihydromyricetin to produce myricetin. This Matthiola incana (Common stock) protein is Flavonol synthase/flavanone 3-hydroxylase.